Reading from the N-terminus, the 1082-residue chain is Transcription elongation factor SPT5 (1082 aa).

Residues 1 to 28 (MSDSEDSNFSEEEDSERSSEAEEAEVEE) show a composition bias toward acidic residues. A disordered region spans residues 1-88 (MSDSEDSNFS…DVDDEYEDED (88 aa)). Phosphoserine occurs at positions 32 and 36. 2 stretches are compositionally biased toward acidic residues: residues 38-62 (KEEEPEEEEEEEEEYDEEEEEEDDD) and 76-88 (DEADVDDEYEDED). Residue K141 forms a Glycyl lysine isopeptide (Lys-Gly) (interchain with G-Cter in SUMO2) linkage. Residues 174-268 (DPNLWTVKCK…TDVLKVVKEV (95 aa)) form an interaction with SUPT4H1 and SUPT4H2 region. Positions 271–304 (LKPKSWVRLKRGIYKDDIAQVDYVEPSQNTISLK) constitute a KOW 1 domain. The segment at 311 to 418 (YDRIKARMSL…STGKEREHNF (108 aa)) is interaction with RNA polymerase II. Positions 326–332 (KRKKFKR) match the UBR5-degron motif. KOW domains are found at residues 418–449 (FQPGDNVEVCEGELINLQGKVLSVDGNKITIM) and 470–501 (FKMGDHVKVIAGRFEGDTGLIVRVEENFVILF). K577 provides a ligand contact to RNA. The KOW 4 domain occupies 592 to 625 (IHVKDIVKVIDGPHSGREGEIRHLYRSFAFLHCK). R617 contributes to the DNA binding site. T661 bears the Phosphothreonine mark. 2 positions are modified to phosphoserine: S664 and S684. The disordered stretch occupies residues 669–694 (SPMHPSAEGQHGGFGSPGGMSRGRGR). Positions 678–690 (QHGGFGSPGGMSR) are enriched in gly residues. An asymmetric dimethylarginine; alternate mark is found at R690 and R692. An omega-N-methylarginine; alternate mark is found at R690 and R692. A Symmetric dimethylarginine; alternate modification is found at R692. The 34-residue stretch at 698-731 (ELIGQTVRISQGPYKGYIGVVKDATESTARVELH) folds into the KOW 5 domain. An N6-acetyllysine modification is found at K712. The segment covering 741 to 801 (RQRLTTVDSQ…RTPHYGSQTP (61 aa)) has biased composition (polar residues). Residues 741–972 (RQRLTTVDSQ…GSGIEQNSSD (232 aa)) are disordered. The CTR1-1; approximate repeat unit spans residues 748-753 (DSQRPG). The segment at 748-811 (DSQRPGGMTS…LHDGSRTPAQ (64 aa)) is 9 X 7 AA approximate tandem repeats of G-S-[QR]-T-P-X-[YQ], motif CTR1. One copy of the CTR1-2 repeat lies at 754–759 (GMTSTY). The stretch at 760-765 (GRTPMY) is one CTR1-3 repeat. One copy of the CTR1-4 repeat lies at 766–772 (GSQTPMY). Residues T769 and T778 each carry the phosphothreonine; by CDK9 modification. The CTR1-5 repeat unit spans residues 775 to 781 (GSRTPMY). The stretch at 782–788 (GSQTPLQ) is one CTR1-6 repeat. The residue at position 783 (S783) is a Phosphoserine. Phosphothreonine occurs at positions 785 and 793. A CTR1-7 repeat occupies 790–796 (GSRTPHY). The stretch at 797–803 (GSQTPLH) is one CTR1-8 repeat. S798 bears the Phosphoserine mark. Residues T800 and T808 each carry the phosphothreonine modification. One copy of the CTR1-9 repeat lies at 805–811 (GSRTPAQ). Residues 828–838 (EEYEYAFDDEP) show a composition bias toward acidic residues. Residues 838-845 (PTPSPQAY) form a CTR2-1 repeat. Residues 838 to 944 (PTPSPQAYGG…ASPSPSPVGY (107 aa)) are 10 X 8 AA approximate tandem repeats of P-[TS]-P-S-P-[QA]-[SG]-Y, motif CTR2. The CTR2-2; approximate repeat unit spans residues 848-856 (TPNPQTPGY). The span at 851 to 860 (PQTPGYPDPS) shows a compositional bias: pro residues. The CTR2-3; approximate repeat unit spans residues 857–863 (PDPSSPQ). A compositionally biased stretch (polar residues) spans 861 to 884 (SPQVNPQYNPQTPGTPAMYNTDQF). One copy of the CTR2-4; half-length repeat lies at 875–879 (TPAMY). Residues 890-896 (PSPQGSY) form a CTR2-5; approximate repeat. The span at 890–905 (PSPQGSYQPSPSPQSY) shows a compositional bias: low complexity. A CTR2-6 repeat occupies 898–905 (PSPSPQSY). The CTR2-7; approximate repeat unit spans residues 910–915 (PSPAGY). A CTR2-8 repeat occupies 918-924 (THSPASY). The CTR2-9 repeat unit spans residues 926 to 933 (PTPSPMAY). A CTR2-10 repeat occupies 937–944 (PSPSPVGY). Phosphothreonine is present on T1028. K1031 participates in a covalent cross-link: Glycyl lysine isopeptide (Lys-Gly) (interchain with G-Cter in SUMO2).

Belongs to the SPT5 family. Interacts with SUPT4H1 to form DSIF. DSIF interacts with the positive transcription elongation factor b complex (P-TEFb complex), which is composed of CDK9 and cyclin-T (CCNT1 or CCNT2). DSIF interacts with RNA polymerase II, and this interaction is reduced by phosphorylation of the C-terminal domain (CTD) of POLR2A by P-TEFb. DSIF also interacts with the NELF complex, which is composed of NELFA, NELFB, NELFD and NELFE, and this interaction occurs following prior binding of DSIF to RNA polymerase II. Also interacts with PRMT1/HRMT1L2, HTATSF1/TATSF1, RNGTT/CAP1A, PRMT5/SKB1, SUPT6H, and can interact with PIN1. Component of a complex which is at least composed of HTATSF1/Tat-SF1, the P-TEFb complex components CDK9 and CCNT1, RNA polymerase II, SUPT5H, and NCL/nucleolin. Interacts with MCM3AP. In terms of processing, methylated by PRMT1/HRMT1L2 and PRMT5/SKB1. Methylation negatively regulates interaction with P-TEFb and RNA polymerase II. Post-translationally, phosphorylated by CDK7 and CDK9. Phosphorylation by P-TEFb (CDK9) at Thr residues of the C-terminal repeats alleviates transcriptional pausing and promotes transcription elongation. Dephosphorylated by the INTAC complex when transcripts are unfavorably configured for transcriptional elongation, leading to premature transcription termination: dephosphorylation is mediated by the PPP2CA component of the INTAC complex. Dephosphorylated by the PNUTS-PP1 complex in termination zones downstream of poly(A) sites, thereby promoting deceleration of RNA polymerase II transcription. Dephosphorylated by the PNUTS-PP1 complex in termination zones downstream of poly(A) sites, thereby promoting deceleration of RNA polymerase II transcription. Phosphorylation may also stimulate interaction with PIN1. Bulk phosphorylation occurs predominantly in mitosis. Ubiquitinated by UBR5 when not assembled in the DSIF complex, leading to its degradation: UBR5 recognizes and binds a degron that is not accessible when SUPT5H is part of the DSIF complex.

The protein resides in the nucleus. Component of the DRB sensitivity-inducing factor complex (DSIF complex), which regulates mRNA processing and transcription elongation by RNA polymerase II. DSIF positively regulates mRNA capping by stimulating the mRNA guanylyltransferase activity of RNGTT/CAP1A. DSIF also acts cooperatively with the negative elongation factor complex (NELF complex) to enhance transcriptional pausing at sites proximal to the promoter. Transcriptional pausing may facilitate the assembly of an elongation competent RNA polymerase II complex. DSIF and NELF promote pausing by inhibition of the transcription elongation factor TFIIS/S-II. TFIIS/S-II binds to RNA polymerase II at transcription pause sites and stimulates the weak intrinsic nuclease activity of the enzyme. Cleavage of blocked transcripts by RNA polymerase II promotes the resumption of transcription from the new 3' terminus and may allow repeated attempts at transcription through natural pause sites. Following phosphorylation by CDK9, DSIF can also positively regulate transcriptional elongation. In Mus musculus (Mouse), this protein is Transcription elongation factor SPT5 (Supt5h).